The sequence spans 878 residues: MSDLAREITPVNIEEELKSSYLDYAMSVIVGRALPDVRDGLKPVHRRVLYAMNVLGNDWNKAYKKSARVVGDVIGKYHPHGDSAVYDTIVRMAQPFSLRYMLVDGQGNFGSIDGDSAAAMRYTEIRLAKIAHELMADLEKETVDFVDNYDGTEKIPDVMPTKIPNLLVNGSSGIAVGMATNIPPHNLTEVINGCLAYIDNEDISIEGLMEHIPGPDFPTAAIINGRRGIEEAYRTGRGKVYIRARAEVEADAKTGRETIIVHEIPYQVNKARLIEKIAELVKDKRVEGISALRDESDKDGMRIVIEVKRDAVGEVVLNNLYSQTQLQVSFGINMVALHHGQPKIMNLKDIISAFVRHRREVVTRRTIFELRKARDRAHILEALAIALANIDPIIELIRRAPTPAEAKAALISRPWDLGNVAAMLERAGDDAARPEWLEPEFGVRDGQYYLTEQQAQAILDLRLQKLTGLEHEKLLDEYKELLEQIAELLHILGSADRLMEVIREEMELIRDQFGDERRTEITANSADINIEDLISQEDVVVTLSHQGYVKYQPLTDYEAQRRGGKGKSAARIKEEDFIDRLLVANTHDTILCFSSRGRLYWMKVYQLPEASRGARGRPIVNLLPLEANERITAILPVREYEEGVNVFMATASGTVKKTALTEFSRPRSAGIIAVNLNDGDELIGVDLTSGSDEVMLFSAAGKVVRFKEDAVRAMGRTATGVRGIKLAGDDKVVSLIIPRGEGAILTVTQNGYGKRTAADEYPTKSRATQGVISIKVTERNGSVVGAVQVDDCDQIMMITDAGTLVRTRVSEISVVGRNTQGVILIRTAEDENVVGLQRVAEPVDDEELDAIDGSVAEGDEDIAPEAESDDDVADDADE.

One can recognise a Topo IIA-type catalytic domain in the interval 34–533 (LPDVRDGLKP…NSADINIEDL (500 aa)). Tyr122 acts as the O-(5'-phospho-DNA)-tyrosine intermediate in catalysis. The short motif at 560–566 (QRRGGKG) is the GyrA-box element. Residues 844–878 (DDEELDAIDGSVAEGDEDIAPEAESDDDVADDADE) form a disordered region. Residues 857 to 878 (EGDEDIAPEAESDDDVADDADE) show a composition bias toward acidic residues.

Belongs to the type II topoisomerase GyrA/ParC subunit family. Heterotetramer, composed of two GyrA and two GyrB chains. In the heterotetramer, GyrA contains the active site tyrosine that forms a transient covalent intermediate with DNA, while GyrB binds cofactors and catalyzes ATP hydrolysis.

Its subcellular location is the cytoplasm. The catalysed reaction is ATP-dependent breakage, passage and rejoining of double-stranded DNA.. Functionally, a type II topoisomerase that negatively supercoils closed circular double-stranded (ds) DNA in an ATP-dependent manner to modulate DNA topology and maintain chromosomes in an underwound state, and also catalyzes the interconversion of other topological isomers of double-stranded DNA rings, including catenanes and knotted rings. Replenishes negative supercoiling downstream of highly transcribed genes to help control overall chromosomal supercoiling density. E.coli makes 15% more negative supercoils in pBR322 plasmid DNA than S.typhimurium; the S.typhimurium GyrB subunit is toxic in E.coli, while the E.coli copy can be expressed in S.typhimurium even though the 2 subunits have 777/804 residues identical. Negative supercoiling favors strand separation, and DNA replication, transcription, recombination and repair, all of which involve strand separation. Type II topoisomerases break and join 2 DNA strands simultaneously in an ATP-dependent manner. The polypeptide is DNA gyrase subunit A (Salmonella typhimurium (strain LT2 / SGSC1412 / ATCC 700720)).